We begin with the raw amino-acid sequence, 298 residues long: Putative ankyrin repeat-containing protein TP_0502 (298 aa).

ANK repeat units lie at residues 143–172, 176–205, 210–239, and 243–272; these read CFEE…SAAL, RGTP…PVDQ, RAYS…DPNV, and NGQT…NPYL.

This chain is Putative ankyrin repeat-containing protein TP_0502, found in Treponema pallidum (strain Nichols).